Consider the following 255-residue polypeptide: Lipoprotein-releasing system ATP-binding protein LolD 2 (255 aa).

In terms of domain architecture, ABC transporter spans 9–254; the sequence is LEARGIRKSY…SDSAKLETVA (246 aa). 45-52 provides a ligand contact to ATP; sequence GRSGSGKS.

This sequence belongs to the ABC transporter superfamily. Lipoprotein translocase (TC 3.A.1.125) family. The complex is composed of two ATP-binding proteins (LolD) and two transmembrane proteins (LolC and LolE).

The protein resides in the cell inner membrane. Functionally, part of the ABC transporter complex LolCDE involved in the translocation of mature outer membrane-directed lipoproteins, from the inner membrane to the periplasmic chaperone, LolA. Responsible for the formation of the LolA-lipoprotein complex in an ATP-dependent manner. The chain is Lipoprotein-releasing system ATP-binding protein LolD 2 from Rhodopirellula baltica (strain DSM 10527 / NCIMB 13988 / SH1).